Consider the following 365-residue polypeptide: 3-isopropylmalate dehydrogenase (365 aa).

Residues Arg-96, Arg-106, Arg-134, and Asp-224 each coordinate substrate. Residues Asp-224, Asp-248, and Asp-252 each contribute to the Mg(2+) site. NAD(+) is bound at residue 288–300; the sequence is GSAPTIAKQNIAN.

It belongs to the isocitrate and isopropylmalate dehydrogenases family. LeuB type 1 subfamily. As to quaternary structure, homodimer. Mg(2+) is required as a cofactor. Mn(2+) serves as cofactor.

Its subcellular location is the cytoplasm. The catalysed reaction is (2R,3S)-3-isopropylmalate + NAD(+) = 4-methyl-2-oxopentanoate + CO2 + NADH. It participates in amino-acid biosynthesis; L-leucine biosynthesis; L-leucine from 3-methyl-2-oxobutanoate: step 3/4. Catalyzes the oxidation of 3-carboxy-2-hydroxy-4-methylpentanoate (3-isopropylmalate) to 3-carboxy-4-methyl-2-oxopentanoate. The product decarboxylates to 4-methyl-2 oxopentanoate. The sequence is that of 3-isopropylmalate dehydrogenase from Dehalococcoides mccartyi (strain CBDB1).